The following is a 607-amino-acid chain: UvrABC system protein C (607 aa).

The 79-residue stretch at 16 to 94 (GRPGVYRMFD…IKEWRPPYNI (79 aa)) folds into the GIY-YIG domain. The UVR domain occupies 203 to 238 (QQLGNELNAEMEKAAMALDFEKAAELRDQIALLRRV).

The protein belongs to the UvrC family. In terms of assembly, interacts with UvrB in an incision complex.

It localises to the cytoplasm. The UvrABC repair system catalyzes the recognition and processing of DNA lesions. UvrC both incises the 5' and 3' sides of the lesion. The N-terminal half is responsible for the 3' incision and the C-terminal half is responsible for the 5' incision. In Pseudomonas putida (strain ATCC 700007 / DSM 6899 / JCM 31910 / BCRC 17059 / LMG 24140 / F1), this protein is UvrABC system protein C.